The following is a 106-amino-acid chain: UPF0145 protein PSEEN3024 (106 aa).

This sequence belongs to the UPF0145 family.

In Pseudomonas entomophila (strain L48), this protein is UPF0145 protein PSEEN3024.